The following is a 1099-amino-acid chain: Ras-associating and dilute domain-containing protein (1099 aa).

Residues A90–D193 enclose the Ras-associating domain. Residues A221–P265 form a disordered region. The span at A226 to P237 shows a compositional bias: polar residues. Residues S235, S245, S248, and S250 each carry the phosphoserine modification. Residues H302–G377 enclose the FHA domain. S422 and S432 each carry phosphoserine. A Dilute domain is found at A525–E792. The tract at residues G868 to G941 is disordered. S915 bears the Phosphoserine mark. Polar residues predominate over residues Q916–M927. Positions M1000–D1085 constitute a PDZ domain.

This sequence belongs to the RADIL family. Interacts with RAP1A; in a GTP-dependent manner. Does not interact with members of the Ras family. Interacts (via PDZ domain) with KIF14; is recruited to the microtubule network restricting its interaction with activated RAP1A.

Functionally, downstream effector of Rap required for cell adhesion and migration of neural crest precursors during development. In Mus musculus (Mouse), this protein is Ras-associating and dilute domain-containing protein (Radil).